The sequence spans 75 residues: Cytochrome c oxidase subunit 6C (75 aa).

Over 1-13 (MAPEVLPKPQMRG) the chain is Mitochondrial matrix. A helical transmembrane segment spans residues 14 to 54 (LLARRLRFHMVTGFVLSLGVAALYKVGVADKRKKAYADFYR). Topologically, residues 55 to 75 (NYDAMKDFEEMRKAGIFQSVK) are mitochondrial intermembrane.

This sequence belongs to the cytochrome c oxidase subunit 6c family. As to quaternary structure, component of the cytochrome c oxidase (complex IV, CIV), a multisubunit enzyme composed of 14 subunits. The complex is composed of a catalytic core of 3 subunits MT-CO1, MT-CO2 and MT-CO3, encoded in the mitochondrial DNA, and 11 supernumerary subunits COX4I, COX5A, COX5B, COX6A, COX6B, COX6C, COX7A, COX7B, COX7C, COX8 and NDUFA4, which are encoded in the nuclear genome. The complex exists as a monomer or a dimer and forms supercomplexes (SCs) in the inner mitochondrial membrane with NADH-ubiquinone oxidoreductase (complex I, CI) and ubiquinol-cytochrome c oxidoreductase (cytochrome b-c1 complex, complex III, CIII), resulting in different assemblies (supercomplex SCI(1)III(2)IV(1) and megacomplex MCI(2)III(2)IV(2)).

The protein localises to the mitochondrion inner membrane. It participates in energy metabolism; oxidative phosphorylation. Its function is as follows. Component of the cytochrome c oxidase, the last enzyme in the mitochondrial electron transport chain which drives oxidative phosphorylation. The respiratory chain contains 3 multisubunit complexes succinate dehydrogenase (complex II, CII), ubiquinol-cytochrome c oxidoreductase (cytochrome b-c1 complex, complex III, CIII) and cytochrome c oxidase (complex IV, CIV), that cooperate to transfer electrons derived from NADH and succinate to molecular oxygen, creating an electrochemical gradient over the inner membrane that drives transmembrane transport and the ATP synthase. Cytochrome c oxidase is the component of the respiratory chain that catalyzes the reduction of oxygen to water. Electrons originating from reduced cytochrome c in the intermembrane space (IMS) are transferred via the dinuclear copper A center (CU(A)) of subunit 2 and heme A of subunit 1 to the active site in subunit 1, a binuclear center (BNC) formed by heme A3 and copper B (CU(B)). The BNC reduces molecular oxygen to 2 water molecules using 4 electrons from cytochrome c in the IMS and 4 protons from the mitochondrial matrix. The chain is Cytochrome c oxidase subunit 6C (COX6C) from Macaca silenus (Lion-tailed macaque).